The sequence spans 474 residues: Probable fucosyltransferase 9 (474 aa).

Residues 1-21 (MIKLTIAIATCLVLCLVLLLP) traverse the membrane as a helical; Signal-anchor for type II membrane protein segment. The Lumenal portion of the chain corresponds to 22-474 (SSNISYRHKY…LKLVDVSDEL (453 aa)). 3 N-linked (GlcNAc...) asparagine glycosylation sites follow: N24, N39, and N208.

Belongs to the glycosyltransferase 37 family. In terms of tissue distribution, expressed in leaves and stems.

It localises to the golgi apparatus. Its subcellular location is the golgi stack membrane. It functions in the pathway protein modification; protein glycosylation. Functionally, may be involved in cell wall biosynthesis. May act as a fucosyltransferase. This Arabidopsis thaliana (Mouse-ear cress) protein is Probable fucosyltransferase 9 (FUT9).